We begin with the raw amino-acid sequence, 293 residues long: Fructokinase (293 aa).

T133 is an ATP binding site. Zn(2+) contacts are provided by H156, C174, H177, and C180. Residues P188 and 236 to 240 (GVMAQ) contribute to the ATP site.

It belongs to the ROK (NagC/XylR) family. It depends on Mg(2+) as a cofactor.

It catalyses the reaction D-fructose + ATP = D-fructose 6-phosphate + ADP + H(+). Inhibition by zinc ions. The protein is Fructokinase (scrK) of Streptococcus mutans serotype c (strain ATCC 700610 / UA159).